Consider the following 518-residue polypeptide: PTS system mannitol-specific EIICB component (518 aa).

The Cytoplasmic portion of the chain corresponds to 1 to 31; sequence MDTMSNSQQNKGIGRKVQAFGSFLSSMIMPN. Residues 20-352 enclose the PTS EIIC type-2 domain; sequence FGSFLSSMIM…LKFTKDPKQD (333 aa). A helical membrane pass occupies residues 32–53; it reads IGAFIAWGFIAAIFIDNGWFPN. Residues 54–57 lie on the Extracellular side of the membrane; the sequence is KDLA. A helical membrane pass occupies residues 58-78; it reads QLAGPMITYLIPLLIAFSGGR. Residues 79–142 lie on the Cytoplasmic side of the membrane; it reads LIHDLRGGII…QGFEMLFNNF (64 aa). The chain crosses the membrane as a helical span at residues 143 to 164; that stretch reads SAGILGFIMTIFGFEVLAPIMK. The Extracellular segment spans residues 165 to 173; that stretch reads FIMHILSVG. The chain crosses the membrane as a helical span at residues 174 to 194; it reads VEALVHAHLLPLVSILVEPAK. Over 195–281 the chain is Cytoplasmic; the sequence is IVFLNNAINH…VLMRPLLFVS (87 aa). Residues 282–301 form a helical membrane-spanning segment; the sequence is VILGGMTGVATYSLLDFGFK. At 302–321 the chain is on the extracellular side; the sequence is TPASPGSIIVYAINAPKGEF. Residues 322–343 form a helical membrane-spanning segment; that stretch reads LHMLTGVVLAALVSFVVSALIL. The Cytoplasmic segment spans residues 344 to 518; it reads KFTKDPKQDL…LINNLKEDQD (175 aa). The disordered stretch occupies residues 369-406; it reads SVASKLSAKDDNKAADNKTAETTTATAASNKAEDKDSD. Over residues 375 to 387 the composition is skewed to basic and acidic residues; that stretch reads SAKDDNKAADNKT. The span at 388 to 398 shows a compositional bias: low complexity; the sequence is AETTTATAASN. The 93-residue stretch at 426-518 folds into the PTS EIIB type-2 domain; that stretch reads DHVIFACDAG…LINNLKEDQD (93 aa). The active-site Phosphocysteine intermediate is the Cys432. Position 432 is a phosphocysteine; by EIIA (Cys432).

In terms of assembly, homodimer.

Its subcellular location is the cell membrane. It carries out the reaction D-mannitol(out) + N(pros)-phospho-L-histidyl-[protein] = D-mannitol 1-phosphate(in) + L-histidyl-[protein]. Its function is as follows. The phosphoenolpyruvate-dependent sugar phosphotransferase system (sugar PTS), a major carbohydrate active transport system, catalyzes the phosphorylation of incoming sugar substrates concomitantly with their translocation across the cell membrane. The enzyme II CmtAB PTS system is involved in D-mannitol transport. The protein is PTS system mannitol-specific EIICB component of Staphylococcus carnosus.